The primary structure comprises 1351 residues: Transcriptional regulator ovo (1351 aa).

Positions 1 to 31 are required for Ubr3 binding and tal-dependent proteolytic processing; it reads MPKIFLIKNRLHQQQQRLLESQNLLQHKNQD. Disordered regions lie at residues 22-77, 100-119, 184-397, 447-554, 640-665, 778-807, 834-887, 916-1000, 1023-1044, and 1113-1192; these read QNLL…SDQQ, LDHLNQNQSPNPNANANPNQ, NSPI…SDEE, AGHG…HFNA, SNSKFHNHHHHHQHNNNNNNNGGQTS, DDEESTSPRQDFELVSTPSLTPDSVTPVEQ, GSNQ…YQHA, LLSQ…PSPT, PMSSSSSSGGTNSSNSSGGSSN, and SKHG…DSSS. The span at 49–60 shows a compositional bias: pro residues; that stretch reads SPTPTSQPPPEP. 2 stretches are compositionally biased toward low complexity: residues 61–72 and 104–119; these read QGQGQQVLGQVP and NQNQSPNPNANANPNQ. The span at 205–232 shows a compositional bias: basic and acidic residues; it reads EKEKPAEREREKSDERTEQVEKEERVER. A compositionally biased stretch (acidic residues) spans 233–242; sequence EEEEDDEVDV. Positions 262 to 272 are enriched in basic and acidic residues; the sequence is QRKEYPQEPKD. The segment covering 324 to 340 has biased composition (pro residues); sequence TPPPADQRPSPPPPRDP. Positions 447–486 are enriched in low complexity; it reads AGHGRNSSSSSGAAGQGFQSSGFGSQNSGSGSSSGNQNAG. The segment covering 487–505 has biased composition (gly residues); that stretch reads SGAGSPGSGAGGGGGMGGG. Residues 530–552 are compositionally biased toward polar residues; the sequence is KSGQQSTASNNTGQSPGANHSHF. A compositionally biased stretch (basic residues) spans 644 to 653; that stretch reads FHNHHHHHQH. Positions 793 to 807 are enriched in polar residues; the sequence is STPSLTPDSVTPVEQ. Low complexity-rich tracts occupy residues 835–878, 916–962, 970–979, 1025–1044, and 1121–1175; these read SNQQ…HVQQ, LLSQ…QQQQ, QQQQQPQPQS, SSSSSSGGTNSSNSSGGSSN, and HQQQ…HGSA. 4 C2H2-type zinc fingers span residues 1197–1219, 1225–1247, 1253–1276, and 1292–1315; these read FVCRVCMKTFSLQRLLNRHMKCH, YLCTFCGKGFNDTFDLKRHTRTH, YKCNLCEKSFTQRCSLESHCQKVH, and YVCEECGHTTCEPEVHYLHLKNNH.

As to quaternary structure, interacts (via N-terminus) with Ubr3; the interaction is mediated by tal. N-terminus is proteolytically cleaved and ubiquitinated via a tal-dependent mechanism, leading to the proteolytic degradation of the N-terminus and the production of transcriptional activator shavenbaby, a truncated form with transcriptional activator activity.

It localises to the cytoplasm. Its subcellular location is the nucleus. It is found in the nucleoplasm. Its function is as follows. Transcriptional regulator with essential functions in the germline and soma. Plays an essential role in regulating the formation of apical cell extensions such as denticles and aristae, and initiating cytoskeletal remodeling during epidermal differentiation. In terms of biological role, transcriptional repressor which functions in postembryonic development. The full-length unprocessed form acts as a transcriptional repressor (Transcriptional repressor svb). Transcriptional activator which initiates trichome development and also promotes tarsal joint development. Has an essential somatic role regulating the tal-dependent formation of trichomes, and initiating cytoskeletal remodeling during epidermal differentiation. Function with SoxN is required for correct denticle morphogenesis on the embryonic epidermis. SoxN and svb appear to act both independently and in conjunction with each other to activate certain genes involved in denticle morphogenesis; Svb appears to be involved in regulating denticle length whereas SoxN regulates the denticle base circumference. Also functions in the development of other apical cell extensions such as bristles. Also has an important role in tarsal joint development, repressing expression of the N ligand Dl and defining its signaling boundary. Functionally, transcriptional repressor which is specifically involved in female germline development, where it functions antagonistically to isoform D. Negatively regulates expression of otu and may also have autoregulatory activity. Negatively regulates expression of piwi in the primordial germ cells (PGCs). Its function is as follows. Transcriptional activator which is specifically involved in female germline development, where it functions antagonistically to isoform C. Necessary and sufficient for normal oogenesis. Required in the primordial germ cells (PGCs) for normal development of male and female germline cells. Plays a role in germline sex determination. Binds the promoter DNA and positively regulates the transcription of the otu gene in a stage-specific manner. May have autoregulatory activity. This is Transcriptional regulator ovo from Drosophila melanogaster (Fruit fly).